The following is a 460-amino-acid chain: Bifunctional protein GlmU (460 aa).

Positions 1–235 are pyrophosphorylase; sequence MALSAAIILA…PLSVEGVNDR (235 aa). Residues 9–12, Lys-23, Gln-76, and 81–82 each bind UDP-N-acetyl-alpha-D-glucosamine; these read LAAG and GT. Residue Asp-109 coordinates Mg(2+). UDP-N-acetyl-alpha-D-glucosamine is bound by residues Gly-146, Glu-161, Asn-176, and Asn-233. Asn-233 is a binding site for Mg(2+). The interval 236–256 is linker; the sequence is VQLAALAKAHNKRVCEHWMRE. The segment at 257–460 is N-acetyltransferase; it reads GVTILDPDTT…VEGWKPEWER (204 aa). UDP-N-acetyl-alpha-D-glucosamine contacts are provided by Arg-338 and Lys-356. Residue His-368 is the Proton acceptor of the active site. 2 residues coordinate UDP-N-acetyl-alpha-D-glucosamine: Tyr-371 and Asn-382. Residues 391–392 and Ala-428 each bind acetyl-CoA; that span reads NY.

In the N-terminal section; belongs to the N-acetylglucosamine-1-phosphate uridyltransferase family. It in the C-terminal section; belongs to the transferase hexapeptide repeat family. Homotrimer. It depends on Mg(2+) as a cofactor.

It localises to the cytoplasm. It carries out the reaction alpha-D-glucosamine 1-phosphate + acetyl-CoA = N-acetyl-alpha-D-glucosamine 1-phosphate + CoA + H(+). It catalyses the reaction N-acetyl-alpha-D-glucosamine 1-phosphate + UTP + H(+) = UDP-N-acetyl-alpha-D-glucosamine + diphosphate. It functions in the pathway nucleotide-sugar biosynthesis; UDP-N-acetyl-alpha-D-glucosamine biosynthesis; N-acetyl-alpha-D-glucosamine 1-phosphate from alpha-D-glucosamine 6-phosphate (route II): step 2/2. It participates in nucleotide-sugar biosynthesis; UDP-N-acetyl-alpha-D-glucosamine biosynthesis; UDP-N-acetyl-alpha-D-glucosamine from N-acetyl-alpha-D-glucosamine 1-phosphate: step 1/1. Its pathway is bacterial outer membrane biogenesis; LPS lipid A biosynthesis. In terms of biological role, catalyzes the last two sequential reactions in the de novo biosynthetic pathway for UDP-N-acetylglucosamine (UDP-GlcNAc). The C-terminal domain catalyzes the transfer of acetyl group from acetyl coenzyme A to glucosamine-1-phosphate (GlcN-1-P) to produce N-acetylglucosamine-1-phosphate (GlcNAc-1-P), which is converted into UDP-GlcNAc by the transfer of uridine 5-monophosphate (from uridine 5-triphosphate), a reaction catalyzed by the N-terminal domain. This Bifidobacterium adolescentis (strain ATCC 15703 / DSM 20083 / NCTC 11814 / E194a) protein is Bifunctional protein GlmU.